The primary structure comprises 375 residues: Protein kinase MCK1 (375 aa).

An N-acetylserine modification is found at Ser2. The region spanning 35 to 327 (VKEYRKIGRG…PRRILAHQFF (293 aa)) is the Protein kinase domain. Residues 41–49 (IGRGAFGTV) and Lys68 each bind ATP. Asp164 (proton acceptor) is an active-site residue. A Phosphoserine modification is found at Ser198. Phosphotyrosine is present on Tyr199. Residue Ser202 is modified to Phosphoserine.

Belongs to the protein kinase superfamily. Ser/Thr protein kinase family. In terms of processing, phosphorylated at tyrosine and serine.

It catalyses the reaction L-seryl-[protein] + ATP = O-phospho-L-seryl-[protein] + ADP + H(+). It carries out the reaction L-threonyl-[protein] + ATP = O-phospho-L-threonyl-[protein] + ADP + H(+). The catalysed reaction is L-tyrosyl-[protein] + ATP = O-phospho-L-tyrosyl-[protein] + ADP + H(+). In terms of biological role, may be an autophosphorylating tyrosine kinase, a bifunctional (serine/tyrosine-specific) protein kinase, or a serine kinase that is a substrate for an associated tyrosine kinase. MCK1 is a transcriptional activator of IME1, it stimulates spore maturation, and play a positive regulatory role in both mitotic centromere function and activation of early meiotic gene expression. This chain is Protein kinase MCK1 (MCK1), found in Saccharomyces cerevisiae (strain ATCC 204508 / S288c) (Baker's yeast).